The primary structure comprises 432 residues: Enolase (432 aa).

A (2R)-2-phosphoglycerate-binding site is contributed by Q166. Residue E208 is the Proton donor of the active site. The Mg(2+) site is built by D245, E291, and D318. 4 residues coordinate (2R)-2-phosphoglycerate: K343, R372, S373, and K394. Catalysis depends on K343, which acts as the Proton acceptor.

It belongs to the enolase family. Mg(2+) is required as a cofactor.

Its subcellular location is the cytoplasm. It is found in the secreted. The protein resides in the cell surface. The enzyme catalyses (2R)-2-phosphoglycerate = phosphoenolpyruvate + H2O. The protein operates within carbohydrate degradation; glycolysis; pyruvate from D-glyceraldehyde 3-phosphate: step 4/5. In terms of biological role, catalyzes the reversible conversion of 2-phosphoglycerate (2-PG) into phosphoenolpyruvate (PEP). It is essential for the degradation of carbohydrates via glycolysis. The polypeptide is Enolase (Leptospira interrogans serogroup Icterohaemorrhagiae serovar copenhageni (strain Fiocruz L1-130)).